We begin with the raw amino-acid sequence, 573 residues long: Acetolactate synthase large subunit (573 aa).

A thiamine diphosphate-binding site is contributed by glutamate 51. Residues arginine 153, 261–282 (HGTL…IGVR), and 304–323 (DIDP…IVGN) contribute to the FAD site. The tract at residues 396–476 (QHQMFAALHY…VVIICLNNHF (81 aa)) is thiamine pyrophosphate binding. Mg(2+) contacts are provided by aspartate 447 and asparagine 474.

It belongs to the TPP enzyme family. As to quaternary structure, dimer of large and small chains. Mg(2+) serves as cofactor. The cofactor is thiamine diphosphate.

It carries out the reaction 2 pyruvate + H(+) = (2S)-2-acetolactate + CO2. The protein operates within amino-acid biosynthesis; L-isoleucine biosynthesis; L-isoleucine from 2-oxobutanoate: step 1/4. Its pathway is amino-acid biosynthesis; L-valine biosynthesis; L-valine from pyruvate: step 1/4. This is Acetolactate synthase large subunit (ilvI) from Haemophilus influenzae (strain ATCC 51907 / DSM 11121 / KW20 / Rd).